A 199-amino-acid polypeptide reads, in one-letter code: Ubiquitin-conjugating enzyme E2-22 kDa (199 aa).

A UBC core domain is found at 4–154 (MAVSRIKREF…AKHWTNAYAG (151 aa)). Residue Cys92 is the Glycyl thioester intermediate of the active site. The region spanning 161 to 199 (DCDSKIQRLRDMGIDEHEARAVLSKENWNLEKATEGLFS) is the UBA domain.

This sequence belongs to the ubiquitin-conjugating enzyme family. Interacts with Rpn10. As to expression, during gastrulation, expression is highest in the invaginating posterior midgut primordium (PMG), high expression is also observed in the cephalic furrow and ventral ectodermal neurogenic region. In stage 10-11 embryos, expression is high in the pole cells present in the pocket formed by the PMG. During germ band retraction, expression appears to reinitiate in many tissues, especially the gut and nervous system. After dorsal closure, expression is detectable at low levels throughout the embryo.

It carries out the reaction S-ubiquitinyl-[E1 ubiquitin-activating enzyme]-L-cysteine + [E2 ubiquitin-conjugating enzyme]-L-cysteine = [E1 ubiquitin-activating enzyme]-L-cysteine + S-ubiquitinyl-[E2 ubiquitin-conjugating enzyme]-L-cysteine.. The protein operates within protein modification; protein ubiquitination. Catalyzes the covalent attachment of ubiquitin to other proteins. This is Ubiquitin-conjugating enzyme E2-22 kDa from Drosophila melanogaster (Fruit fly).